A 264-amino-acid polypeptide reads, in one-letter code: MNRTLTRDQVLALAEHIENAELDVHDIPKVTNDYPDMTFADAYDVQWEIRRRKEARGNKVVGLKMGLTSWAKMAQMGVETPIYGFLVDYFSVPDGGVVDTSKLIHPKIEAEISFVTKAPLHGPGCHIGQVLAATDFVIPTVEVIDSRYENFKFDLISVVADNASSTRFITGGQMANVADLDLRTLGVVMEKNGEVVELGAGAAVLGHPASSVAMLANLLAERGEHIPAGSFIMTGGITAAVPVAPGDNITVRYQGLCSVSARFI.

Belongs to the hydratase/decarboxylase family.

The catalysed reaction is (3E)-2-oxohex-3-enedioate + H(+) = 2-oxopent-4-enoate + CO2. Its pathway is aromatic compound metabolism; benzoate degradation via hydroxylation. The polypeptide is 4-oxalocrotonate decarboxylase (dmpH) (Pseudomonas sp. (strain CF600)).